A 1308-amino-acid polypeptide reads, in one-letter code: Cilia- and flagella-associated protein 57 C (1308 aa).

7 WD repeats span residues 57 to 99, 110 to 154, 415 to 454, 504 to 546, 551 to 590, 645 to 689, and 694 to 733; these read NEYR…RRKN, YNIK…KCLG, NHTG…IKIS, SPFK…NPSQ, GHTG…QHQQ, LLDI…GKFT, and HDER…ARGM. A coiled-coil region spans residues 779–1000; it reads LNSRDDRIRQ…RDKIDGQKKI (222 aa).

Belongs to the CFAP57 family. As to quaternary structure, forms a heterodimer with CFAP57A. Associates with components of the nexin-dynein regulatory complex (N-DRC) and the CFAP184:CFAP263 complex.

Its subcellular location is the cell projection. The protein localises to the cilium. Associates with components of the nexin-dynein regulatory complex (N-DRC), a key regulator of ciliary/flagellar motility, and might act as an inner dynein arm (IDA) hub or linkage. The protein is Cilia- and flagella-associated protein 57 C (CFAP57C) of Tetrahymena thermophila (strain SB210).